The sequence spans 46 residues: Mu-hexatoxin-Mg2a (46 aa).

5 disulfide bridges follow: Cys-3-Cys-18, Cys-10-Cys-24, Cys-17-Cys-36, Cys-21-Cys-43, and Cys-26-Cys-34.

This sequence belongs to the neurotoxin 02 (plectoxin) family. 02 (plectoxin) subfamily. Expressed by the venom gland.

The protein localises to the secreted. Its function is as follows. Competes for binding at site 3 of the insect voltage-gated sodium channel (Nav). Insecticidal neurotoxin. Causes temporary paralysis to lepidopteran larvae (10.3 nmol/g) or to crickets (doses from 0.93 to 119 ug/g). Is not toxic to mice when injected intracranially (high doses). The sequence is that of Mu-hexatoxin-Mg2a from Macrothele gigas (Japanese funnel web spider).